A 342-amino-acid chain; its full sequence is Nicotinate-nucleotide--dimethylbenzimidazole phosphoribosyltransferase (342 aa).

The Proton acceptor role is filled by Glu311.

Belongs to the CobT family.

It carries out the reaction 5,6-dimethylbenzimidazole + nicotinate beta-D-ribonucleotide = alpha-ribazole 5'-phosphate + nicotinate + H(+). It functions in the pathway nucleoside biosynthesis; alpha-ribazole biosynthesis; alpha-ribazole from 5,6-dimethylbenzimidazole: step 1/2. Functionally, catalyzes the synthesis of alpha-ribazole-5'-phosphate from nicotinate mononucleotide (NAMN) and 5,6-dimethylbenzimidazole (DMB). The chain is Nicotinate-nucleotide--dimethylbenzimidazole phosphoribosyltransferase from Vibrio vulnificus (strain CMCP6).